Here is a 201-residue protein sequence, read N- to C-terminus: MPSLYLASASPRRRELLTQIGVPLSVLVTAIDESPLPNEAPAAYVERLARGKAAAGLAMLEGRGEDGCVLGADTSVVIDGRILGKPVDQADGLAMLAALSGREHQVLTAVALAAAGGVEARVVECRVRFRQVAPEEALRYWQSGEPADKAGGYAIQGLGAIFVSRIEGSYSAVVGLPLCETAELLREFGIPCWQPVGGNPP.

Asp73 functions as the Proton acceptor in the catalytic mechanism.

This sequence belongs to the Maf family. YhdE subfamily. A divalent metal cation is required as a cofactor.

It is found in the cytoplasm. It carries out the reaction dTTP + H2O = dTMP + diphosphate + H(+). It catalyses the reaction UTP + H2O = UMP + diphosphate + H(+). Its function is as follows. Nucleoside triphosphate pyrophosphatase that hydrolyzes dTTP and UTP. May have a dual role in cell division arrest and in preventing the incorporation of modified nucleotides into cellular nucleic acids. The chain is dTTP/UTP pyrophosphatase from Pseudomonas aeruginosa (strain ATCC 15692 / DSM 22644 / CIP 104116 / JCM 14847 / LMG 12228 / 1C / PRS 101 / PAO1).